The primary structure comprises 333 residues: UPF0284 protein TGAM_0534 (333 aa).

Belongs to the UPF0284 family.

This is UPF0284 protein TGAM_0534 from Thermococcus gammatolerans (strain DSM 15229 / JCM 11827 / EJ3).